The primary structure comprises 119 residues: Protein TusC (119 aa).

It belongs to the DsrF/TusC family. In terms of assembly, heterohexamer, formed by a dimer of trimers. The hexameric TusBCD complex contains 2 copies each of TusB, TusC and TusD. The TusBCD complex interacts with TusE.

It is found in the cytoplasm. Functionally, part of a sulfur-relay system required for 2-thiolation of 5-methylaminomethyl-2-thiouridine (mnm(5)s(2)U) at tRNA wobble positions. This is Protein TusC from Shigella dysenteriae serotype 1 (strain Sd197).